Consider the following 373-residue polypeptide: Histidinol-phosphate aminotransferase (373 aa).

The segment covering 1–10 (MTGVPGSSIT) has biased composition (polar residues). Positions 1–45 (MTGVPGSSITLDDLPLRDDLRGKSPYGAPQLSVPVRLNTNENPHP) are disordered. Lys237 is subject to N6-(pyridoxal phosphate)lysine.

Belongs to the class-II pyridoxal-phosphate-dependent aminotransferase family. Histidinol-phosphate aminotransferase subfamily. In terms of assembly, homodimer. Pyridoxal 5'-phosphate serves as cofactor.

It carries out the reaction L-histidinol phosphate + 2-oxoglutarate = 3-(imidazol-4-yl)-2-oxopropyl phosphate + L-glutamate. Its pathway is amino-acid biosynthesis; L-histidine biosynthesis; L-histidine from 5-phospho-alpha-D-ribose 1-diphosphate: step 7/9. In Mycolicibacterium vanbaalenii (strain DSM 7251 / JCM 13017 / BCRC 16820 / KCTC 9966 / NRRL B-24157 / PYR-1) (Mycobacterium vanbaalenii), this protein is Histidinol-phosphate aminotransferase.